We begin with the raw amino-acid sequence, 381 residues long: MASPSCFHSEDEDSLKGCEMYVQKHGIQQVLKECIVHLCVAKPDRPLRFLREHFEKLEKEENRQILARQKSNSQCDSHDEEISPTPPNPVVKARRRRGGVSAEVYTEEDAVSYVRKVIPKDYKTMTALAKAISKNVLFSHLDDNERSDIFDAMFPVTHIDGETVIQQGNEGDNFYVIDQGEVDVYVNGEWVTNISEGGSFGELALIYGTPRAATVKAKTDLKLWGIDRDSYRRILMGSTLRKRKMYEEFLSKVSILESLEKWERLTVADALEPVQFEDGEKIVVQGEPGDDFYIITEGTASVLQRRSPNEEYVEVGRLGPSDYFGEIALLLNRPRAATVVARGPLKCVKLDRPRFERVLGPCSEILKRNIQRYNSFISLTV.

Residues 1–136 (MASPSCFHSE…ALAKAISKNV (136 aa)) form a dimerization and phosphorylation region. Serine 3 carries the phosphoserine modification. A 3'-nitrotyrosine modification is found at tyrosine 21. The segment at 66-88 (LARQKSNSQCDSHDEEISPTPPN) is disordered. Serine 77 and serine 83 each carry phosphoserine. Residue threonine 85 is modified to Phosphothreonine. A Pseudophosphorylation motif motif is present at residues 96–100 (RRGGV). Arginine 97 is subject to Omega-N-methylarginine. Residues 137–254 (LFSH…SKVS), glutamate 202, arginine 211, 255–381 (ILES…SLTV), glutamate 326, and arginine 335 each bind 3',5'-cyclic AMP.

The protein belongs to the cAMP-dependent kinase regulatory chain family. The inactive holoenzyme is composed of two regulatory chains and two catalytic chains. Activation by cAMP releases the two active catalytic monomers and the regulatory dimer. Interacts with PRKX; regulates this cAMP-dependent protein kinase. Interacts with smAKAP; this interaction may target PRKAR1B to the plasma membrane. The pseudophosphorylation site binds to the substrate-binding region of the catalytic chain, resulting in the inhibition of its activity. As to expression, abundant in brain and testis. No expression in lung, heart, liver, spleen, kidney and skeletal muscle.

It localises to the cell membrane. In terms of biological role, regulatory subunit of the cAMP-dependent protein kinases involved in cAMP signaling in cells. The polypeptide is cAMP-dependent protein kinase type I-beta regulatory subunit (Prkar1b) (Rattus norvegicus (Rat)).